The primary structure comprises 348 residues: Serine/threonine-protein kinase SBK2 (348 aa).

The disordered stretch occupies residues 1 to 25 (MPGKQSEEGPAEAGASEDSEEEGLG). The region spanning 62 to 330 (YEEVRPLGQG…IREHLGRPWR (269 aa)) is the Protein kinase domain. Residues 68–76 (LGQGCYGRV) and lysine 91 each bind ATP. The Proton acceptor role is filled by aspartate 183.

Belongs to the protein kinase superfamily. Ser/Thr protein kinase family. STKL subfamily.

It carries out the reaction L-seryl-[protein] + ATP = O-phospho-L-seryl-[protein] + ADP + H(+). It catalyses the reaction L-threonyl-[protein] + ATP = O-phospho-L-threonyl-[protein] + ADP + H(+). The protein is Serine/threonine-protein kinase SBK2 (SBK2) of Homo sapiens (Human).